The chain runs to 335 residues: MGHPPLLPLLLLLHTCVPASWGLRCMQCKTNGDCRVEECALGQDLCRTTIVRMWEEGEELELVEKSCTHSEKTNRTLSYRTGLKITSLTEVVCGLDLCNQGNSGRAVTYSRSRYLECISCGSSNMSCERGRHQSLQCRNPEEQCLDVVTHWIQEGEEGRPKDDRHLRGCGYLPGCPGSNGFHNNDTFHFLKCCNTTKCNEGPILELENLPQNGRQCYSCKGNSTHGCSSEETFLIDCRGPMNQCLVATGTHEPKNQSYMVRGCATASMCQHAHLGDAFSMNHIDVSCCTKSGCNHPDLDVQYRSGAAPQPGPAHLSLTITLLMTARLWGGTLLWT.

The signal sequence occupies residues M1–G22. 3 UPAR/Ly6 domains span residues L23 to Y114, L115 to G213, and R214 to G305. 3 cysteine pairs are disulfide-bonded: C25/C46, C28/C34, and C39/C67. N74 carries an N-linked (GlcNAc...) asparagine glycan. Disulfide bonds link C93-C98, C117-C144, C120-C127, C137-C169, C175-C192, C193-C198, C216-C244, C219-C227, C237-C263, C269-C287, and C288-C293. The N-linked (GlcNAc...) asparagine glycan is linked to N124. N-linked (GlcNAc...) asparagine glycosylation is found at N184, N194, N222, and N255. G305 is lipidated: GPI-anchor amidated glycine. Positions A306–T335 are cleaved as a propeptide — removed in mature form.

As to quaternary structure, monomer. Interacts (via the UPAR/Ly6 domains) with SRPX2. Interacts with MRC2. Interacts with FAP (seprase); the interaction occurs at the cell surface of invadopodia membrane. Interacts with SORL1 (via N-terminal ectodomain); this interaction decreases PLAUR internalization. The ternary complex composed of PLAUR-PLAU-SERPINE1 also interacts with SORL1. Interacts with CD82; this interaction prevents PLAUR from binding to its high affinity ligand PLAU.

It localises to the cell membrane. The protein localises to the cell projection. The protein resides in the invadopodium membrane. Its function is as follows. Acts as a receptor for urokinase plasminogen activator. Plays a role in localizing and promoting plasmin formation. Mediates the proteolysis-independent signal transduction activation effects of U-PA. It is subject to negative-feedback regulation by U-PA which cleaves it into an inactive form. The protein is Urokinase plasminogen activator surface receptor (PLAUR) of Pan troglodytes (Chimpanzee).